Consider the following 160-residue polypeptide: uncharacterized protein (160 aa).

The first 23 residues, 1 to 23, serve as a signal peptide directing secretion; it reads MSIPHSVFSALLVFVALATTTLA. Topologically, residues 24 to 132 are cytoplasmic; it reads STEACLPTNK…DPNTAYWSSD (109 aa). Residues 133–155 traverse the membrane as a helical segment; it reads LFGFYTTPTNVTVEMTGYLIWSM. The Extracellular portion of the chain corresponds to 156 to 160; it reads GNRRR.

The protein to yeast protein FLO1.

It is found in the cell membrane. This is an uncharacterized protein from Saccharomyces cerevisiae (strain ATCC 204508 / S288c) (Baker's yeast).